The following is a 494-amino-acid chain: MFS-type transporter lnaF (494 aa).

Positions 1–51 are disordered; sequence MTYDPENAMGEARADAPVEAEKEHEATQTTVKESTLGYDNSSDPSRRDSYR. The span at 12 to 26 shows a compositional bias: basic and acidic residues; that stretch reads ARADAPVEAEKEHEA. N-linked (GlcNAc...) asparagine glycans are attached at residues asparagine 40, asparagine 58, and asparagine 68. 10 helical membrane-spanning segments follow: residues 105–125, 128–148, 156–176, 203–223, 228–248, 290–310, 323–343, 354–374, 383–403, and 446–466; these read SLLI…DMFS, AGLL…TLAL, MLWY…GEYP, TLMA…CLIA, LPVT…IIMV, LAFF…STII, AIWQ…GAWL, ILGF…FPHL, VLYG…IGLI, and STFY…WFLP.

It belongs to the major facilitator superfamily. Sugar transporter (TC 2.A.1.1) family.

It is found in the cell membrane. Functionally, MFS-type transporter; part of the lna gene cluster that mediates the biosynthesis of diastereomeric piperazines. Lna and lnb clusters encode sets of enzymes that produce overlapping sets of previously undescribed metabolites such as piperazinomycin-like metabolites or morpholine. The lna and lnb biosynthetic pathways appear to be part of a signaling network that controls the formation of sclerotia, a resilient overwintering structure. May be involved in the secretion of the metabolites produced by the lna and lnb clusters. This chain is MFS-type transporter lnaF, found in Aspergillus flavus (strain ATCC 200026 / FGSC A1120 / IAM 13836 / NRRL 3357 / JCM 12722 / SRRC 167).